Here is a 134-residue protein sequence, read N- to C-terminus: Large ribosomal subunit protein uL22 (134 aa).

Belongs to the universal ribosomal protein uL22 family. Part of the 50S ribosomal subunit.

Functionally, this protein binds specifically to 23S rRNA; its binding is stimulated by other ribosomal proteins, e.g. L4, L17, and L20. It is important during the early stages of 50S assembly. It makes multiple contacts with different domains of the 23S rRNA in the assembled 50S subunit and ribosome. Its function is as follows. The globular domain of the protein is located near the polypeptide exit tunnel on the outside of the subunit, while an extended beta-hairpin is found that lines the wall of the exit tunnel in the center of the 70S ribosome. The polypeptide is Large ribosomal subunit protein uL22 (Rhodococcus erythropolis (strain PR4 / NBRC 100887)).